The sequence spans 241 residues: Protein GrpE (241 aa).

Over residues 28–49 the composition is skewed to basic and acidic residues; the sequence is QNCQKEETQTTNKDNQKEDETF. A disordered region spans residues 28-78; it reads QNCQKEETQTTNKDNQKEDETFKNQPNKTKQTNTKQQKHLSKESSHQQITK. A compositionally biased stretch (low complexity) spans 50 to 62; the sequence is KNQPNKTKQTNTK.

It belongs to the GrpE family. In terms of assembly, homodimer.

The protein resides in the cytoplasm. Its function is as follows. Participates actively in the response to hyperosmotic and heat shock by preventing the aggregation of stress-denatured proteins, in association with DnaK and GrpE. It is the nucleotide exchange factor for DnaK and may function as a thermosensor. Unfolded proteins bind initially to DnaJ; upon interaction with the DnaJ-bound protein, DnaK hydrolyzes its bound ATP, resulting in the formation of a stable complex. GrpE releases ADP from DnaK; ATP binding to DnaK triggers the release of the substrate protein, thus completing the reaction cycle. Several rounds of ATP-dependent interactions between DnaJ, DnaK and GrpE are required for fully efficient folding. In Aster yellows witches'-broom phytoplasma (strain AYWB), this protein is Protein GrpE.